We begin with the raw amino-acid sequence, 260 residues long: Ras-related protein Rab-26 (260 aa).

Positions 1-56 are disordered; the sequence is MSRKKTPKSKGGSEPATSTLPAAAAATNGPRLAHPRTVRPGPEAPPNGPPQSIRPS. Serine 76, glycine 77, valine 78, glycine 79, lysine 80, threonine 81, cysteine 82, serine 99, and threonine 100 together coordinate GTP. Threonine 81 is a binding site for Mg(2+). 2 short sequence motifs (switch) span residues 90–105 and 123–140; these read GAFL…GIDF and DTAG…YYRD. Positions 100 and 123 each coordinate Mg(2+). Glycine 126, asparagine 181, lysine 182, aspartate 184, alanine 212, and arginine 213 together coordinate GTP. 2 S-geranylgeranyl cysteine lipidation sites follow: cysteine 257 and cysteine 258.

It belongs to the small GTPase superfamily. Rab family. As to quaternary structure, interacts with ADRA2B. Interacts with RIMS1. Requires Mg(2+) as cofactor. As to expression, detected in zymogenic cells in the stomach.

The protein resides in the cytoplasmic vesicle. The protein localises to the secretory vesicle membrane. It is found in the golgi apparatus membrane. It carries out the reaction GTP + H2O = GDP + phosphate + H(+). Regulated by guanine nucleotide exchange factors (GEFs) which promote the exchange of bound GDP for free GTP. Regulated by GTPase activating proteins (GAPs) which increase the GTP hydrolysis activity. Inhibited by GDP dissociation inhibitors (GDIs). Its function is as follows. The small GTPases Rab are key regulators of intracellular membrane trafficking, from the formation of transport vesicles to their fusion with membranes. Rabs cycle between an inactive GDP-bound form and an active GTP-bound form that is able to recruit to membranes different set of downstream effectors directly responsible for vesicle formation, movement, tethering and fusion. RAB26 mediates transport of ADRA2A and ADRA2B from the Golgi to the cell membrane. Plays a role in the maturation of zymogenic granules and in pepsinogen secretion in the stomach. Plays a role in the secretion of amylase from acinar granules in the parotid gland. This is Ras-related protein Rab-26 from Mus musculus (Mouse).